We begin with the raw amino-acid sequence, 551 residues long: Membrane protein insertase YidC (551 aa).

The chain crosses the membrane as a helical span at residues 6–26 (YFLWGALFISGYLLFLQWSQD). Low complexity predominate over residues 34 to 50 (SVAQSTQSQSETNSQMS). A disordered region spans residues 34-68 (SVAQSTQSQSETNSQMSDDLPMATQSTTEANAEIP). Residues 56-68 (ATQSTTEANAEIP) are compositionally biased toward polar residues. The next 5 membrane-spanning stretches (helical) occupy residues 340 to 360 (TVDY…LTLI), 363 to 383 (FVIN…AIFF), 433 to 453 (LGGC…YWVL), 464 to 484 (FFLW…PILM), and 509 to 529 (IMPV…VLYW).

Belongs to the OXA1/ALB3/YidC family. Type 1 subfamily. In terms of assembly, interacts with the Sec translocase complex via SecD. Specifically interacts with transmembrane segments of nascent integral membrane proteins during membrane integration.

The protein localises to the cell inner membrane. Required for the insertion and/or proper folding and/or complex formation of integral membrane proteins into the membrane. Involved in integration of membrane proteins that insert both dependently and independently of the Sec translocase complex, as well as at least some lipoproteins. Aids folding of multispanning membrane proteins. The protein is Membrane protein insertase YidC of Marinomonas sp. (strain MWYL1).